Reading from the N-terminus, the 130-residue chain is Large ribosomal subunit protein eL22 (130 aa).

This sequence belongs to the eukaryotic ribosomal protein eL22 family.

The chain is Large ribosomal subunit protein eL22 (rpl-22) from Caenorhabditis elegans.